The sequence spans 231 residues: NADH-ubiquinone oxidoreductase chain 4 (231 aa).

7 helical membrane-spanning segments follow: residues 1–21 (PIAG…YGII), 34–54 (VFLP…LTCL), 61–80 (SLIA…AIII), 84–106 (WGLS…LFCL), 128–148 (ILPM…ATPP), 156–176 (LLII…LGLS), and 211–231 (LLMI…ELVI).

The protein belongs to the complex I subunit 4 family.

It localises to the mitochondrion membrane. The catalysed reaction is a ubiquinone + NADH + 5 H(+)(in) = a ubiquinol + NAD(+) + 4 H(+)(out). In terms of biological role, core subunit of the mitochondrial membrane respiratory chain NADH dehydrogenase (Complex I) that is believed to belong to the minimal assembly required for catalysis. Complex I functions in the transfer of electrons from NADH to the respiratory chain. The immediate electron acceptor for the enzyme is believed to be ubiquinone. The polypeptide is NADH-ubiquinone oxidoreductase chain 4 (MT-ND4) (Tropidolaemus wagleri (Wagler's pit viper)).